We begin with the raw amino-acid sequence, 259 residues long: Proteasome subunit alpha (259 aa).

It belongs to the peptidase T1A family. As to quaternary structure, the 20S proteasome core is composed of 14 alpha and 14 beta subunits that assemble into four stacked heptameric rings, resulting in a barrel-shaped structure. The two inner rings, each composed of seven catalytic beta subunits, are sandwiched by two outer rings, each composed of seven alpha subunits. The catalytic chamber with the active sites is on the inside of the barrel. Has a gated structure, the ends of the cylinder being occluded by the N-termini of the alpha-subunits. Is capped at one or both ends by the proteasome regulatory ATPase, PAN.

The protein resides in the cytoplasm. The formation of the proteasomal ATPase PAN-20S proteasome complex, via the docking of the C-termini of PAN into the intersubunit pockets in the alpha-rings, triggers opening of the gate for substrate entry. Interconversion between the open-gate and close-gate conformations leads to a dynamic regulation of the 20S proteasome proteolysis activity. Functionally, component of the proteasome core, a large protease complex with broad specificity involved in protein degradation. The chain is Proteasome subunit alpha from Methanococcus maripaludis (strain C5 / ATCC BAA-1333).